Reading from the N-terminus, the 433-residue chain is Serine--tRNA ligase (433 aa).

An L-serine-binding site is contributed by 236-238 (TAE). Residue 267-269 (RSE) coordinates ATP. Glutamate 290 is an L-serine binding site. 354 to 357 (EISS) provides a ligand contact to ATP. Serine 394 lines the L-serine pocket.

Belongs to the class-II aminoacyl-tRNA synthetase family. Type-1 seryl-tRNA synthetase subfamily. Homodimer. The tRNA molecule binds across the dimer.

The protein localises to the cytoplasm. It catalyses the reaction tRNA(Ser) + L-serine + ATP = L-seryl-tRNA(Ser) + AMP + diphosphate + H(+). It carries out the reaction tRNA(Sec) + L-serine + ATP = L-seryl-tRNA(Sec) + AMP + diphosphate + H(+). The protein operates within aminoacyl-tRNA biosynthesis; selenocysteinyl-tRNA(Sec) biosynthesis; L-seryl-tRNA(Sec) from L-serine and tRNA(Sec): step 1/1. Catalyzes the attachment of serine to tRNA(Ser). Is also able to aminoacylate tRNA(Sec) with serine, to form the misacylated tRNA L-seryl-tRNA(Sec), which will be further converted into selenocysteinyl-tRNA(Sec). The polypeptide is Serine--tRNA ligase (Acidiphilium cryptum (strain JF-5)).